The primary structure comprises 259 residues: Thiazole synthase (259 aa).

Lys98 functions as the Schiff-base intermediate with DXP in the catalytic mechanism. 1-deoxy-D-xylulose 5-phosphate is bound by residues Gly159, 185 to 186 (AG), and 207 to 208 (NS).

Belongs to the ThiG family. In terms of assembly, homotetramer. Forms heterodimers with either ThiH or ThiS.

It localises to the cytoplasm. It carries out the reaction [ThiS sulfur-carrier protein]-C-terminal-Gly-aminoethanethioate + 2-iminoacetate + 1-deoxy-D-xylulose 5-phosphate = [ThiS sulfur-carrier protein]-C-terminal Gly-Gly + 2-[(2R,5Z)-2-carboxy-4-methylthiazol-5(2H)-ylidene]ethyl phosphate + 2 H2O + H(+). Its pathway is cofactor biosynthesis; thiamine diphosphate biosynthesis. In terms of biological role, catalyzes the rearrangement of 1-deoxy-D-xylulose 5-phosphate (DXP) to produce the thiazole phosphate moiety of thiamine. Sulfur is provided by the thiocarboxylate moiety of the carrier protein ThiS. In vitro, sulfur can be provided by H(2)S. This Chlorobaculum tepidum (strain ATCC 49652 / DSM 12025 / NBRC 103806 / TLS) (Chlorobium tepidum) protein is Thiazole synthase.